We begin with the raw amino-acid sequence, 327 residues long: WRKY transcription factor WRKY76 (327 aa).

Residues 56-76 (AKIVEAKVTQMSEENRRLTEV) are a coiled coil. The interval 87-135 (RLGLDGSASPPRPVSPLSGKKRSRESMETANSCDANSNRHQGGDADHAE) is disordered. Positions 106 to 112 (KKRSRES) match the Nuclear localization signal motif. The span at 114 to 126 (ETANSCDANSNRH) shows a compositional bias: polar residues. Residues 160-226 (DTSLVVKDGY…YEGEHNHPHP (67 aa)) constitute a DNA-binding region (WRKY).

It belongs to the WRKY group II-a family.

Its subcellular location is the nucleus. Transcription repressor. Interacts specifically with the W box (5'-(T)TGAC[CT]-3'), a frequently occurring elicitor-responsive cis-acting element. Regulates, probably indirectly, the activation of defense-related genes during defense response. Modulates plant innate immunity against X.oryzae pv. oryzae (Xoo). In Oryza sativa subsp. japonica (Rice), this protein is WRKY transcription factor WRKY76.